Here is a 361-residue protein sequence, read N- to C-terminus: Uroporphyrinogen decarboxylase (361 aa).

Residues 27 to 31, D77, Y154, T209, and H327 contribute to the substrate site; that span reads RQAGR.

Belongs to the uroporphyrinogen decarboxylase family. Homodimer.

The protein localises to the cytoplasm. The enzyme catalyses uroporphyrinogen III + 4 H(+) = coproporphyrinogen III + 4 CO2. It participates in porphyrin-containing compound metabolism; protoporphyrin-IX biosynthesis; coproporphyrinogen-III from 5-aminolevulinate: step 4/4. Functionally, catalyzes the decarboxylation of four acetate groups of uroporphyrinogen-III to yield coproporphyrinogen-III. This is Uroporphyrinogen decarboxylase from Coxiella burnetii (strain RSA 331 / Henzerling II).